Here is a 316-residue protein sequence, read N- to C-terminus: Transaldolase (316 aa).

K132 (schiff-base intermediate with substrate) is an active-site residue.

The protein belongs to the transaldolase family. Type 1 subfamily. In terms of assembly, homodimer.

Its subcellular location is the cytoplasm. The enzyme catalyses D-sedoheptulose 7-phosphate + D-glyceraldehyde 3-phosphate = D-erythrose 4-phosphate + beta-D-fructose 6-phosphate. The protein operates within carbohydrate degradation; pentose phosphate pathway; D-glyceraldehyde 3-phosphate and beta-D-fructose 6-phosphate from D-ribose 5-phosphate and D-xylulose 5-phosphate (non-oxidative stage): step 2/3. Transaldolase is important for the balance of metabolites in the pentose-phosphate pathway. The protein is Transaldolase of Methylobacillus flagellatus (strain ATCC 51484 / DSM 6875 / VKM B-1610 / KT).